Here is a 195-residue protein sequence, read N- to C-terminus: Imidazoleglycerol-phosphate dehydratase (195 aa).

This sequence belongs to the imidazoleglycerol-phosphate dehydratase family.

The protein localises to the cytoplasm. It catalyses the reaction D-erythro-1-(imidazol-4-yl)glycerol 3-phosphate = 3-(imidazol-4-yl)-2-oxopropyl phosphate + H2O. Its pathway is amino-acid biosynthesis; L-histidine biosynthesis; L-histidine from 5-phospho-alpha-D-ribose 1-diphosphate: step 6/9. The protein is Imidazoleglycerol-phosphate dehydratase of Shouchella clausii (strain KSM-K16) (Alkalihalobacillus clausii).